A 546-amino-acid polypeptide reads, in one-letter code: Adenine DNA glycosylase (546 aa).

A disordered region spans residues 19 to 51 (RAAVGSGHRKQAASQEGRQKHAKNNSQAKPSAC). E131 (proton donor/acceptor) is an active-site residue. [4Fe-4S] cluster contacts are provided by C287, C294, C297, and C303. One can recognise a Nudix hydrolase domain in the interval 364–495 (PREESSATCV…AMKKVFRVYQ (132 aa)). The short motif at 404–426 (VTWEPSEQLQRKALLQELQRWAG) is the Nudix box element.

This sequence belongs to the Nth/MutY family. Requires [4Fe-4S] cluster as cofactor.

It localises to the nucleus. The protein localises to the mitochondrion. It carries out the reaction Hydrolyzes free adenine bases from 7,8-dihydro-8-oxoguanine:adenine mismatched double-stranded DNA, leaving an apurinic site.. In terms of biological role, involved in oxidative DNA damage repair. Initiates repair of A*oxoG to C*G by removing the inappropriately paired adenine base from the DNA backbone. Possesses both adenine and 2-OH-A DNA glycosylase activities. This Homo sapiens (Human) protein is Adenine DNA glycosylase (MUTYH).